A 208-amino-acid chain; its full sequence is Urease accessory protein UreE (208 aa).

Residues 145-165 form a disordered region; it reads EGGAYSAGGHGHTHAPAATPV.

Belongs to the UreE family.

It is found in the cytoplasm. In terms of biological role, involved in urease metallocenter assembly. Binds nickel. Probably functions as a nickel donor during metallocenter assembly. The polypeptide is Urease accessory protein UreE (Polaromonas naphthalenivorans (strain CJ2)).